The sequence spans 420 residues: Protein phosphatase methylesterase 1 (420 aa).

Low complexity-rich tracts occupy residues 18–28 (PEAPLLSESSS) and 42–51 (SSVSSTGTVI). A disordered region spans residues 18–51 (PEAPLLSESSSMNHPAESSHDEDSSSVSSTGTVI). Active-site residues include S197, D223, and H354.

The protein belongs to the AB hydrolase superfamily.

The catalysed reaction is [phosphatase 2A protein]-C-terminal L-leucine methyl ester + H2O = [phosphatase 2A protein]-C-terminal L-leucine + methanol + H(+). Its function is as follows. Demethylates proteins that have been reversibly carboxymethylated. Demethylates the phosphatase PP2A catalytic subunit. The sequence is that of Protein phosphatase methylesterase 1 (ppe1) from Aspergillus fumigatus (strain ATCC MYA-4609 / CBS 101355 / FGSC A1100 / Af293) (Neosartorya fumigata).